The chain runs to 904 residues: Myelin regulatory factor-like protein (904 aa).

The disordered stretch occupies residues 46–132 (LQRQLPDTPP…ATCRHQTGPS (87 aa)). The segment covering 100 to 117 (PSQSMAGQTHSSFQNGYP) has biased composition (polar residues). A DNA-binding region (NDT80) is located at residues 108–400 (THSSFQNGYP…SNPGQFENDS (293 aa)). In terms of domain architecture, Peptidase S74 spans 446–554 (SDSRVKENIQ…KLTNNLEERI (109 aa)). Residues 538–575 (GAVKQLCKLTNNLEERIEELEIWNKKLARLKRLSSSWK) adopt a coiled-coil conformation. The helical transmembrane segment at 624 to 644 (LVVVLIAVMAFCALTIVALYI) threads the bilayer. A disordered region spans residues 656-688 (NLPLSNMTSSPEPALSSTAPTSAPHTTPETTQT). Low complexity predominate over residues 663-688 (TSSPEPALSSTAPTSAPHTTPETTQT).

This sequence belongs to the MRF family.

The protein localises to the membrane. The sequence is that of Myelin regulatory factor-like protein (Myrfl) from Mus musculus (Mouse).